The chain runs to 215 residues: Vesicle-trafficking protein SEC22b (215 aa).

The Cytoplasmic segment spans residues 1–194; it reads MVLLTMIARV…KYLNMRSTYA (194 aa). A Longin domain is found at 6 to 119; that stretch reads MIARVADGLP…YSFIEFDTFI (114 aa). Residue K38 is modified to N6-acetyllysine. The v-SNARE coiled-coil homology domain maps to 134 to 194; that stretch reads NLGSINTELQ…KYLNMRSTYA (61 aa). At S137 the chain carries Phosphoserine. Position 140 is a phosphothreonine (T140). 4 positions are modified to phosphoserine: S164, S168, S174, and S177. A helical; Anchor for type IV membrane protein membrane pass occupies residues 195–215; it reads KLAAVAVFFIMLIVYVRFWWL.

This sequence belongs to the synaptobrevin family. Interacts with STX17. Component of two distinct SNARE complexes consisting of STX5, GOSR2/BOS1, BET1 and SEC22B or STX18, USE1L, BNIP1/SEC20L and SEC22B. YKT6 can probably replace SEC22B as subunit of either complex. Interacts with the COPII Sec23/24 complex composed of SEC23A and SEC24A; recruits SEC22B into COPII-coated vesicles to allow its transport from the endoplasmic reticulum to the Golgi. Interacts with BET1.

Its subcellular location is the endoplasmic reticulum membrane. It is found in the endoplasmic reticulum-Golgi intermediate compartment membrane. The protein localises to the golgi apparatus. The protein resides in the cis-Golgi network membrane. It localises to the trans-Golgi network membrane. Its subcellular location is the melanosome. Its function is as follows. SNARE involved in targeting and fusion of ER-derived transport vesicles with the Golgi complex as well as Golgi-derived retrograde transport vesicles with the ER. This is Vesicle-trafficking protein SEC22b (Sec22b) from Cricetulus griseus (Chinese hamster).